We begin with the raw amino-acid sequence, 161 residues long: Allophycocyanin alpha chain (161 aa).

Asparagine 71 carries the post-translational modification N4-methylasparagine. Cysteine 81 serves as a coordination point for (2R,3E)-phycocyanobilin.

The protein belongs to the phycobiliprotein family. In terms of assembly, heterodimer of an alpha and a beta chain. In terms of processing, contains one covalently linked phycocyanobilin chromophore.

It is found in the plastid. The protein localises to the chloroplast thylakoid membrane. Its function is as follows. Light-harvesting photosynthetic bile pigment-protein from the phycobiliprotein complex. Allophycocyanin has a maximum absorption at approximately 650 nanometers. This Cyanidium caldarium (Red alga) protein is Allophycocyanin alpha chain (apcA).